A 361-amino-acid polypeptide reads, in one-letter code: Molybdenum import ATP-binding protein ModC (361 aa).

The region spanning 1 to 228 (MLTINIEKQL…EQMRPWVPLQ (228 aa)) is the ABC transporter domain. Position 31 to 38 (31 to 38 (GRSGAGKT)) interacts with ATP. One can recognise a Mop domain in the interval 289–356 (RSSIRNVLKG…IKGVTMTQMD (68 aa)).

Belongs to the ABC transporter superfamily. Molybdate importer (TC 3.A.1.8) family. The complex is composed of two ATP-binding proteins (ModC), two transmembrane proteins (ModB) and a solute-binding protein (ModA).

The protein localises to the cell inner membrane. It carries out the reaction molybdate(out) + ATP + H2O = molybdate(in) + ADP + phosphate + H(+). Its function is as follows. Part of the ABC transporter complex ModABC involved in molybdenum import. Responsible for energy coupling to the transport system. The protein is Molybdenum import ATP-binding protein ModC of Shewanella oneidensis (strain ATCC 700550 / JCM 31522 / CIP 106686 / LMG 19005 / NCIMB 14063 / MR-1).